The primary structure comprises 394 residues: Probable malate--CoA ligase subunit beta (394 aa).

The ATP-grasp domain maps to 9-244; the sequence is KELLARHGVH…KSQEDPRETF (236 aa). The ATP site is built by K46, E99, V102, and E107. Residues N199 and D213 each contribute to the Mg(2+) site.

It belongs to the succinate/malate CoA ligase beta subunit family. In terms of assembly, heterotetramer of two alpha and two beta subunits. Mg(2+) is required as a cofactor.

It catalyses the reaction (S)-malate + ATP + CoA = (S)-malyl-CoA + ADP + phosphate. Its pathway is one-carbon metabolism; formaldehyde assimilation via serine pathway. The protein is Probable malate--CoA ligase subunit beta (mtkA) of Mesorhizobium japonicum (strain LMG 29417 / CECT 9101 / MAFF 303099) (Mesorhizobium loti (strain MAFF 303099)).